The chain runs to 193 residues: Potassium-transporting ATPase KdpC subunit (193 aa).

The chain crosses the membrane as a helical span at residues 7-27 (PLIVVFVVLVAVTGLAYPAVM).

This sequence belongs to the KdpC family. The system is composed of three essential subunits: KdpA, KdpB and KdpC.

It is found in the cell inner membrane. Its function is as follows. Part of the high-affinity ATP-driven potassium transport (or Kdp) system, which catalyzes the hydrolysis of ATP coupled with the electrogenic transport of potassium into the cytoplasm. This subunit acts as a catalytic chaperone that increases the ATP-binding affinity of the ATP-hydrolyzing subunit KdpB by the formation of a transient KdpB/KdpC/ATP ternary complex. In Burkholderia mallei (strain NCTC 10247), this protein is Potassium-transporting ATPase KdpC subunit.